Consider the following 212-residue polypeptide: Orotate phosphoribosyltransferase (212 aa).

Residues arginine 95, lysine 99, histidine 101, and 121 to 129 each bind 5-phospho-alpha-D-ribose 1-diphosphate; that span reads DDLITTGGS. Residue threonine 125 coordinates orotate.

It belongs to the purine/pyrimidine phosphoribosyltransferase family. PyrE subfamily. Homodimer. Requires Mg(2+) as cofactor.

It carries out the reaction orotidine 5'-phosphate + diphosphate = orotate + 5-phospho-alpha-D-ribose 1-diphosphate. The protein operates within pyrimidine metabolism; UMP biosynthesis via de novo pathway; UMP from orotate: step 1/2. Its function is as follows. Catalyzes the transfer of a ribosyl phosphate group from 5-phosphoribose 1-diphosphate to orotate, leading to the formation of orotidine monophosphate (OMP). In Lactobacillus johnsonii (strain CNCM I-12250 / La1 / NCC 533), this protein is Orotate phosphoribosyltransferase.